Consider the following 882-residue polypeptide: Lon protease homolog, mitochondrial (882 aa).

The transit peptide at 1–34 (MIHVLKSRSTLLTASSIVRTSVGSSSRYSQTRTY) directs the protein to the mitochondrion. One can recognise a Lon N-terminal domain in the interval 68 to 281 (TLGLPLVSRP…KALVLLNRER (214 aa)). 435-442 (GPPGTGKT) contacts ATP. The Lon proteolytic domain occupies 687-878 (PLPHGIVMGL…DKVYEVAFSS (192 aa)). Residues Ser-784 and Lys-827 contribute to the active site.

This sequence belongs to the peptidase S16 family. In terms of assembly, homohexamer or homoheptamer. Organized in a ring with a central cavity.

The protein localises to the mitochondrion matrix. The catalysed reaction is Hydrolysis of proteins in presence of ATP.. ATP-dependent serine protease that mediates the selective degradation of misfolded, unassembled or oxidatively damaged polypeptides as well as certain short-lived regulatory proteins in the mitochondrial matrix. May also have a chaperone function in the assembly of inner membrane protein complexes. Participates in the regulation of mitochondrial gene expression and in the maintenance of the integrity of the mitochondrial genome. Binds to mitochondrial DNA in a site-specific manner. This chain is Lon protease homolog, mitochondrial, found in Phaeodactylum tricornutum (strain CCAP 1055/1).